The chain runs to 500 residues: Glycerol kinase (500 aa).

An ADP-binding site is contributed by T12. ATP is bound by residues T12, T13, and S14. T12 contacts sn-glycerol 3-phosphate. R16 serves as a coordination point for ADP. Sn-glycerol 3-phosphate is bound by residues R82, E83, Y134, and D243. Glycerol contacts are provided by R82, E83, Y134, D243, and Q244. Positions 265 and 308 each coordinate ADP. 4 residues coordinate ATP: T265, G308, Q312, and G411. G411 contacts ADP.

The protein belongs to the FGGY kinase family.

It catalyses the reaction glycerol + ATP = sn-glycerol 3-phosphate + ADP + H(+). It functions in the pathway polyol metabolism; glycerol degradation via glycerol kinase pathway; sn-glycerol 3-phosphate from glycerol: step 1/1. Inhibited by fructose 1,6-bisphosphate (FBP). Key enzyme in the regulation of glycerol uptake and metabolism. Catalyzes the phosphorylation of glycerol to yield sn-glycerol 3-phosphate. The sequence is that of Glycerol kinase from Chelativorans sp. (strain BNC1).